Consider the following 442-residue polypeptide: Testican-1 (442 aa).

A signal peptide spans 1–21 (MPAIAVLAAAAAAWCFLQVDS). Intrachain disulfides connect cysteine 89-cysteine 100, cysteine 94-cysteine 110, cysteine 139-cysteine 169, cysteine 142-cysteine 162, cysteine 151-cysteine 183, cysteine 316-cysteine 340, cysteine 351-cysteine 358, and cysteine 360-cysteine 379. The Kazal-like domain maps to 133-185 (PSNLVKCKPCPVAQSAMVCGSDGHTYTSKCKLEFHACSTGKSLNSLCDGPCPC). Residues 313-379 (GLPCQNEMNR…GSRKQGTVSC (67 aa)) enclose the Thyroglobulin type-1 domain. 2 disordered regions span residues 375–395 (GTVS…GGSV) and 420–442 (TRAV…GYIW). O-linked (Xyl...) (glycosaminoglycan) serine glycosylation is found at serine 386 and serine 391. Acidic residues predominate over residues 425–442 (EDDEDEDDDKEDEVGYIW).

Contains chondroitin sulfate and heparan sulfate O-linked oligosaccharides. As to expression, predominantly expressed in the postsynaptic area of pyramidal neurons.

It localises to the secreted. It is found in the extracellular space. The protein localises to the extracellular matrix. Functionally, may play a role in cell-cell and cell-matrix interactions. May contribute to various neuronal mechanisms in the central nervous system. This is Testican-1 (Spock1) from Mus musculus (Mouse).